The sequence spans 582 residues: uncharacterized protein (582 aa).

A run of 6 helical transmembrane segments spans residues 17–37 (VAMLMMLQLVSTLASLYLPTV), 57–77 (LGAVMLGVTGLQVLCAIGAVY), 131–151 (MTATVLVTAPIMCVGGIIMAI), 156–176 (ALTWLLLVSVPILAVANYWII), 239–259 (ALMLPVTTLTINASSVALIWF), and 271–291 (VGSLIAFLSYFAQILMAVLMA). Residues 17–300 (VAMLMMLQLV…ATMTLAVLPR (284 aa)) form the ABC transmembrane type-1 domain. Residues 335 to 571 (VRLAGATFTY…CPTYAEFAAS (237 aa)) enclose the ABC transporter domain. Residue 369-376 (GSTGSGKS) coordinates ATP.

It belongs to the ABC transporter superfamily. MsbA family.

Its subcellular location is the cell membrane. This is an uncharacterized protein from Mycobacterium bovis (strain ATCC BAA-935 / AF2122/97).